A 604-amino-acid polypeptide reads, in one-letter code: Siderophore iron transporter mirB (604 aa).

The tract at residues 1-61 (MTIGSKFSLL…DNSSDEALPS (61 aa)) is disordered. 14 helical membrane passes run 73–95 (AVTL…LVTL), 115–137 (FQSH…ALYI), 149–168 (AEGW…MMAA), 178–200 (ADVF…AADI), 207–224 (GIAF…AFAG), 237–259 (WRWG…YFVL), 289–311 (YFFA…FLLP), 326–343 (YIIA…LFVL), 363–385 (TVLG…NSYF), 400–422 (AGYV…GFAI), 427–449 (YFRW…MIHF), 454–476 (QYIG…FVLL), 489–511 (YVAA…GNAI), and 566–588 (AQAR…MFMV).

The protein belongs to the major facilitator superfamily.

It localises to the membrane. In terms of biological role, involved in the transport of siderophore triacestylfusarinine C and so has a role in iron homeostasis. The protein is Siderophore iron transporter mirB (mirB) of Emericella nidulans (strain FGSC A4 / ATCC 38163 / CBS 112.46 / NRRL 194 / M139) (Aspergillus nidulans).